Reading from the N-terminus, the 111-residue chain is Secreted RxLR effector protein 82 (111 aa).

The signal sequence occupies residues 1–17 (MFHLYLLLVFETRYTCL). A RxLR motif is present at residues 28-31 (RWLR).

It belongs to the RxLR effector family.

It is found in the secreted. It localises to the host nucleus. In terms of biological role, secreted effector that acts as an elicitor that induces cell death in host plant cells. The polypeptide is Secreted RxLR effector protein 82 (Plasmopara viticola (Downy mildew of grapevine)).